We begin with the raw amino-acid sequence, 296 residues long: MGCRHSRLSSCKPPKKKRQEPEPEQPPRPEPHELGPLNGDTAITVQLCASEEAERHQKDITRILQQHEEEKKKWAQQVEKERELELRDRLDEQQRVLEGKNEEALQVLRASYEQEKEALTHSFREASSTQQETIDRLTSQLEAFQAKMKRVEESILSRNYKKHIQDYGSPSQFWEQELESLHFVIEMKNERIHELDRRLILMETVKEKNLILEEKITTLQQENEDLHVRSRNQVVLSRQLSEDLLLTREALEKEVQLRRQLQQEKEELLYRVLGANASPAFPLAPVTPTEVSFLAT.

A compositionally biased stretch (basic residues) spans 1–18 (MGCRHSRLSSCKPPKKKR). Positions 1 to 41 (MGCRHSRLSSCKPPKKKRQEPEPEQPPRPEPHELGPLNGDT) are disordered. Gly-2 carries N-myristoyl glycine lipidation. Positions 19–33 (QEPEPEQPPRPEPHE) are enriched in basic and acidic residues. Positions 48-272 (CASEEAERHQ…QEKEELLYRV (225 aa)) form a coiled coil. Phosphoserine occurs at positions 154 and 241.

This sequence belongs to the CCDC69 family. Highly expressed in duodenum, esophagus, pancreas, prostate, salivary gland, thymus and urinary bladder.

Its subcellular location is the cytoplasm. It is found in the cytoskeleton. It localises to the spindle. The protein localises to the midbody. Functionally, may act as a scaffold to regulate the recruitment and assembly of spindle midzone components. Required for the localization of AURKB and PLK1 to the spindle midzone. This chain is Coiled-coil domain-containing protein 69, found in Homo sapiens (Human).